The sequence spans 286 residues: Energy-coupling factor transporter ATP-binding protein EcfA2 (286 aa).

The 244-residue stretch at 3 to 246 folds into the ABC transporter domain; that stretch reads IQFNQVSYIY…KTQLLKWHIE (244 aa). Position 40–47 (40–47) interacts with ATP; sequence GQTGSGKS.

Belongs to the ABC transporter superfamily. Energy-coupling factor EcfA family. Forms a stable energy-coupling factor (ECF) transporter complex composed of 2 membrane-embedded substrate-binding proteins (S component), 2 ATP-binding proteins (A component) and 2 transmembrane proteins (T component).

The protein localises to the cell membrane. ATP-binding (A) component of a common energy-coupling factor (ECF) ABC-transporter complex. Unlike classic ABC transporters this ECF transporter provides the energy necessary to transport a number of different substrates. The chain is Energy-coupling factor transporter ATP-binding protein EcfA2 from Staphylococcus epidermidis (strain ATCC 12228 / FDA PCI 1200).